The sequence spans 87 residues: Large ribosomal subunit protein bL27 (87 aa).

The interval 1–21 (MAHKKAGGSSRNGRDSESKRL) is disordered.

Belongs to the bacterial ribosomal protein bL27 family.

This chain is Large ribosomal subunit protein bL27, found in Burkholderia mallei (strain NCTC 10247).